Here is a 1907-residue protein sequence, read N- to C-terminus: Receptor-type tyrosine-protein phosphatase S (1907 aa).

Positions 1–29 are cleaved as a signal peptide; the sequence is MAPTWSPSVVSVVGPVGLFLVLLARGCLA. Over 30–1257 the chain is Extracellular; the sequence is EEPPRFIREP…PQPIVDGEEG (1228 aa). 3 Ig-like C2-type domains span residues 33 to 123, 135 to 224, and 232 to 314; these read PRFI…AKLT, PNID…ANLY, and PRFS…AQIT. 2 disulfides stabilise this stretch: Cys-54/Cys-107 and Cys-156/Cys-207. The important for binding to glycosaminoglycan chains stretch occupies residues 68-72; it reads KKGKK. 2 N-linked (GlcNAc...) asparagine glycosylation sites follow: Asn-250 and Asn-295. Residues Cys-253 and Cys-298 are joined by a disulfide bond. Fibronectin type-III domains follow at residues 321–411, 416–510, 514–603, 608–705, 710–809, 810–906, 907–1008, and 1011–1095; these read APGT…TGEQ, APRN…TQQG, QPMN…TLQA, PPQD…TDED, PPRK…TKGA, VLGR…APRG, FPQI…LARD, and SPKN…TAFN. Over residues 691-700 the composition is skewed to low complexity; that stretch reads PGPESSPVVV. Positions 691 to 711 are disordered; sequence PGPESSPVVVRTDEDVPSAPP. The N-linked (GlcNAc...) asparagine glycan is linked to Asn-720. Residue Asn-916 is glycosylated (N-linked (GlcNAc...) asparagine). A helical membrane pass occupies residues 1258–1278; the sequence is LIWVIGPVLAVVFIICIVIAI. At 1279 to 1907 the chain is on the cytoplasmic side; that stretch reads LLYKNKPDSK…YLGSFDHYAT (629 aa). The span at 1286–1296 shows a compositional bias: basic and acidic residues; it reads DSKRKDSEPRT. The segment at 1286–1313 is disordered; sequence DSKRKDSEPRTKCLLNNADLAPHHPKDP. 2 consecutive Tyrosine-protein phosphatase domains span residues 1352 to 1607 and 1639 to 1898; these read LSQE…LLEA and MELE…ALEY. Substrate-binding positions include Asp-1516, 1548–1554, and Gln-1592; that span reads CSAGVGR. Cys-1548 functions as the Phosphocysteine intermediate in the catalytic mechanism. Cys-1839 serves as the catalytic Phosphocysteine intermediate.

Belongs to the protein-tyrosine phosphatase family. Receptor class 2A subfamily. In terms of assembly, binding to large heparan sulfate proteoglycan structures promotes oligomerization. Binding to chondroitin sulfate proteoglycan does not lead to oligomerization. Interacts (via Ig-like domains) with NTRK3. Interacts (via Ig-like domains) with NTRK1, but does not form detectable complexes with NTRK2. Interacts with PPFIA1, PPFIA2 and PPFIA3. In terms of processing, a cleavage occurs, separating the extracellular domain from the transmembrane segment. This process called 'ectodomain shedding' is thought to be involved in receptor desensitization, signal transduction and/or membrane localization. In terms of tissue distribution, detected in brain cortex, cerebellum and thoracic spinal cord (at protein level). Detected in motor cortex and white matter of the spinal cord, but not in spinal cord gray matter. Isoform 1 and isoform 6 are predominantly expressed in the brain (cerebrum and cerebellum) and to a lesser extent in the heart and skeletal muscle. Also found in neuronal-derived cell lines. Detected in the ganglion cell layer of the retina and in glial cells along the optic nerve. Detected in bone marrow and spleen plasmacytoid dendritic cells.

It is found in the cell membrane. The protein localises to the cell projection. It localises to the axon. The protein resides in the perikaryon. Its subcellular location is the cytoplasmic vesicle. It is found in the secretory vesicle. The protein localises to the synaptic vesicle membrane. It localises to the synapse. The protein resides in the synaptosome. Its subcellular location is the postsynaptic density. It is found in the neuron projection. The protein localises to the growth cone. The enzyme catalyses O-phospho-L-tyrosyl-[protein] + H2O = L-tyrosyl-[protein] + phosphate. Functionally, cell surface receptor that binds to glycosaminoglycans, including chondroitin sulfate proteoglycans and heparan sulfate proteoglycans. Binding to chondroitin sulfate and heparan sulfate proteoglycans has opposite effects on PTPRS oligomerization and regulation of neurite outgrowth. Contributes to the inhibition of neurite and axonal outgrowth by chondroitin sulfate proteoglycans, also after nerve transection. Plays a role in stimulating neurite outgrowth in response to the heparan sulfate proteoglycan GPC2. Required for normal brain development, especially for normal development of the pituitary gland and the olfactory bulb. Functions as a tyrosine phosphatase. Mediates dephosphorylation of NTRK1, NTRK2 and NTRK3. Plays a role in down-regulation of signaling cascades that lead to the activation of Akt and MAP kinases. Down-regulates TLR9-mediated activation of NF-kappa-B, as well as production of TNF, interferon alpha and interferon beta. This chain is Receptor-type tyrosine-protein phosphatase S (Ptprs), found in Mus musculus (Mouse).